The sequence spans 322 residues: Anthranilate phosphoribosyltransferase (322 aa).

5-phospho-alpha-D-ribose 1-diphosphate is bound by residues Gly71, 74–75 (GD), Thr79, 81–84 (NVST), 99–107 (KFGNRSASG), and Ala111. Gly71 contacts anthranilate. Ser83 contributes to the Mg(2+) binding site. Residue Asn102 participates in anthranilate binding. Position 157 (Arg157) interacts with anthranilate. Residues Asp215 and Glu216 each coordinate Mg(2+).

It belongs to the anthranilate phosphoribosyltransferase family. As to quaternary structure, homodimer. Mg(2+) serves as cofactor.

It catalyses the reaction N-(5-phospho-beta-D-ribosyl)anthranilate + diphosphate = 5-phospho-alpha-D-ribose 1-diphosphate + anthranilate. Its pathway is amino-acid biosynthesis; L-tryptophan biosynthesis; L-tryptophan from chorismate: step 2/5. Catalyzes the transfer of the phosphoribosyl group of 5-phosphorylribose-1-pyrophosphate (PRPP) to anthranilate to yield N-(5'-phosphoribosyl)-anthranilate (PRA). The protein is Anthranilate phosphoribosyltransferase of Thermoplasma acidophilum (strain ATCC 25905 / DSM 1728 / JCM 9062 / NBRC 15155 / AMRC-C165).